Reading from the N-terminus, the 357-residue chain is D-amino-acid oxidase (357 aa).

FAD-binding residues include Ala13, Gly14, Ser42, Gly47, Arg289, Gly315, and Gly318. Arg289 contacts D-proline. A D-serine-binding site is contributed by Arg289.

Belongs to the DAMOX/DASOX family. Requires FAD as cofactor.

It is found in the cytoplasm. The protein resides in the secreted. Its subcellular location is the cell wall. It catalyses the reaction a D-alpha-amino acid + O2 + H2O = a 2-oxocarboxylate + H2O2 + NH4(+). It carries out the reaction D-phenylalanine + O2 + H2O = 3-phenylpyruvate + H2O2 + NH4(+). The enzyme catalyses D-lysine + O2 + H2O = 6-amino-2-oxohexanoate + H2O2 + NH4(+). The catalysed reaction is D-methionine + O2 + H2O = 4-methylsulfanyl-2-oxobutanoate + H2O2 + NH4(+). It catalyses the reaction D-arginine + O2 + H2O = 5-guanidino-2-oxopentanoate + H2O2 + NH4(+). It carries out the reaction D-ornithine + O2 + H2O = 5-amino-2-oxopentanoate + H2O2 + NH4(+). The enzyme catalyses D-leucine + O2 + H2O = 4-methyl-2-oxopentanoate + H2O2 + NH4(+). The catalysed reaction is D-histidine + O2 + H2O = 3-(imidazol-5-yl)pyruvate + H2O2 + NH4(+). Its activity is regulated as follows. Activated by manganese, copper, and iron ions. Inhibited by barium, aluminum, and zinc ions. In terms of biological role, catalyzes the oxidative deamination of D-amino acids with broad substrate specificity. This Unknown prokaryotic organism protein is D-amino-acid oxidase.